Reading from the N-terminus, the 77-residue chain is Acyl carrier protein (77 aa).

The Carrier domain occupies 1–76 (MAVFEDVRDV…DVVNYIEKLG (76 aa)). Position 36 is an O-(pantetheine 4'-phosphoryl)serine (serine 36).

It belongs to the acyl carrier protein (ACP) family. Post-translationally, 4'-phosphopantetheine is transferred from CoA to a specific serine of apo-ACP by AcpS. This modification is essential for activity because fatty acids are bound in thioester linkage to the sulfhydryl of the prosthetic group.

Its subcellular location is the cytoplasm. It participates in lipid metabolism; fatty acid biosynthesis. Carrier of the growing fatty acid chain in fatty acid biosynthesis. This Campylobacter concisus (strain 13826) protein is Acyl carrier protein.